Here is a 221-residue protein sequence, read N- to C-terminus: PKHD-type hydroxylase P9303_20491 (221 aa).

The region spanning 80–174 is the Fe2OG dioxygenase domain; that stretch reads HIHGVMFSRS…RLVCVGWIQS (95 aa). Fe cation contacts are provided by His-98, Asp-100, and His-155. Arg-165 serves as a coordination point for 2-oxoglutarate.

It depends on Fe(2+) as a cofactor. The cofactor is L-ascorbate.

The protein is PKHD-type hydroxylase P9303_20491 of Prochlorococcus marinus (strain MIT 9303).